The chain runs to 348 residues: Guanine nucleotide-binding protein alpha-13 subunit (348 aa).

A lipid anchor (N-myristoyl glycine) is attached at Gly2. Residue Cys3 is the site of S-palmitoyl cysteine attachment. Positions 34–348 (SHIRLLLLGS…VFKDIAKRKK (315 aa)) constitute a G-alpha domain. The G1 motif stretch occupies residues 37–50 (RLLLLGSAESGKTT). GTP-binding positions include 42-49 (GSAESGKT), 176-182 (IMAYVPT), 201-205 (DIGGQ), 270-273 (NEID), and Ala326. The tract at residues 174-182 (DLIMAYVPT) is G2 motif. Thr182 contributes to the Mg(2+) binding site. Positions 197-206 (FQLFDIGGQK) are G3 motif. Positions 266 to 273 (YLFLNEID) are G4 motif. Positions 324–329 (CIAIDT) are G5 motif.

This sequence belongs to the G-alpha family. As to quaternary structure, g proteins are composed of 3 units; alpha, beta and gamma. The alpha chain contains the guanine nucleotide binding site.

Its function is as follows. Guanine nucleotide-binding proteins (G proteins) are involved as modulators or transducers in various transmembrane signaling systems. This is Guanine nucleotide-binding protein alpha-13 subunit (gpa-13) from Caenorhabditis elegans.